The primary structure comprises 1096 residues: Serine-repeat antigen protein 3 (1096 aa).

A signal peptide spans 1-21 (MARLSSIVFIICLLLCNNAIS). The interval 28-205 (PSSGGTLSGG…RSPPPQVNNI (178 aa)) is disordered. A compositionally biased stretch (low complexity) spans 77–97 (NSDSTGDSSLGSTGSNGSQPA). A glycan (N-linked (GlcNAc...) asparagine) is linked at N92. A compositionally biased stretch (basic and acidic residues) spans 102–113 (KEPEPTTPKEPE). Polar residues predominate over residues 123–147 (VTPQKTAETASGKQVSPTPSENPPS). Residues 149–161 (DTPKPESSSEKKV) are compositionally biased toward basic and acidic residues. Residues N204, N607, N637, N662, N671, N712, N892, and N951 are each glycosylated (N-linked (GlcNAc...) asparagine). Disordered stretches follow at residues 916–952 (EAKN…QANS) and 964–1006 (NQRT…ASAN). 2 stretches are compositionally biased toward polar residues: residues 925 to 952 (QNYG…QANS) and 964 to 975 (NQRTADSNPNAQ). Over residues 976–1006 (STPSPNTTVTDTVNSNTANSNTANSNTASAN) the composition is skewed to low complexity. N981 and N1039 each carry an N-linked (GlcNAc...) asparagine glycan.

The protein belongs to the peptidase C1 family. In terms of processing, proteolytically cleaved in both blood and liver stage parasites. Precursor of 130 kDa is processed into 72 kDa and 55 kDa forms. Proteolytically cleaved by SUB1.

The protein localises to the cell membrane. It localises to the parasitophorous vacuole. The protein resides in the secreted. It is found in the host cytoplasm. Its function is as follows. Putative cysteine protease. Probably involved in merozoite release from the parasitophorous vacuole during liver stages. The protein is Serine-repeat antigen protein 3 of Plasmodium berghei (strain Anka).